Consider the following 204-residue polypeptide: HTH-type transcriptional activator BcrR (204 aa).

The Cytoplasmic segment spans residues 1-81 (MEFNEKLQQL…ETENRSNLKK (81 aa)). The HTH cro/C1-type domain occupies 7–61 (LQQLRTGKNLTQEQLAEQLYVSRTAISKWESGKGYPNMESLKCISKFFSVTIDEL). The H-T-H motif DNA-binding region spans 18–37 (QEQLAEQLYVSRTAISKWES). Residues 82-102 (IYNYIYGILDMMAVAFIFLPL) form a helical membrane-spanning segment. Over 103–126 (YGNSVGGYVYAVNLLSFTATTPFN) the chain is Extracellular. Residues 127-147 (LAVYWSAFAALIIIGIGKIIS) form a helical membrane-spanning segment. The Cytoplasmic segment spans residues 148–154 (THLDKEK). Residues 155–175 (WGGIATKCSLTITALAVCFFA) traverse the membrane as a helical segment. The Extracellular portion of the chain corresponds to 176–181 (AAREPY). Residues 182-202 (ITVLVFLLLIGKIFVWIKQMG) form a helical membrane-spanning segment. Residues 203–204 (MK) are Cytoplasmic-facing.

Its subcellular location is the cell membrane. Constitutively bound to the bcrABD promoter. Requires bacitracin for activation, probably through a conformational change, such as the oligomerization of inactive dimers to form active tetramers. Functions both as a membrane-bound sensor and a transducer of bacitracin availability to activate transcription of the bcrABD operon in the presence of bacitracin. Binds specifically to two inverted repeat sequences on the bcrABD promoter, irrespective of bacitracin concentration. The sequence is that of HTH-type transcriptional activator BcrR from Enterococcus faecalis (Streptococcus faecalis).